Consider the following 263-residue polypeptide: 4-hydroxy-2-oxo-heptane-1,7-dioate aldolase (263 aa).

His45 serves as the catalytic Proton acceptor. Gln147 contacts substrate. Position 149 (Glu149) interacts with a divalent metal cation. 2 residues coordinate substrate: Ala174 and Asp175. Asp175 is an a divalent metal cation binding site.

The protein belongs to the HpcH/HpaI aldolase family. Homohexamer; trimer of dimers. A divalent metal cation serves as cofactor.

It carries out the reaction 4-hydroxy-2-oxoheptanedioate = succinate semialdehyde + pyruvate. The protein operates within aromatic compound metabolism; 4-hydroxyphenylacetate degradation; pyruvate and succinate semialdehyde from 4-hydroxyphenylacetate: step 7/7. In terms of biological role, catalyzes the reversible retro-aldol cleavage of 4-hydroxy-2-ketoheptane-1,7-dioate (HKHD) to pyruvate and succinic semialdehyde. This chain is 4-hydroxy-2-oxo-heptane-1,7-dioate aldolase, found in Salmonella choleraesuis (strain SC-B67).